Consider the following 365-residue polypeptide: uncharacterized protein (365 aa).

Disordered regions lie at residues 218–262 (QRPS…AEAA) and 315–342 (PRLP…RTPC). Composition is skewed to basic and acidic residues over residues 239–257 (PDNR…KDPE) and 331–341 (MEFRNLSDRTP).

This is an uncharacterized protein from Mus musculus (Mouse).